The following is a 73-amino-acid chain: Translation initiation factor IF-1 (73 aa).

Positions 1 to 72 (MAKDEIIEFE…SKGRITYRGK (72 aa)) constitute an S1-like domain.

It belongs to the IF-1 family. Component of the 30S ribosomal translation pre-initiation complex which assembles on the 30S ribosome in the order IF-2 and IF-3, IF-1 and N-formylmethionyl-tRNA(fMet); mRNA recruitment can occur at any time during PIC assembly.

The protein resides in the cytoplasm. One of the essential components for the initiation of protein synthesis. Stabilizes the binding of IF-2 and IF-3 on the 30S subunit to which N-formylmethionyl-tRNA(fMet) subsequently binds. Helps modulate mRNA selection, yielding the 30S pre-initiation complex (PIC). Upon addition of the 50S ribosomal subunit IF-1, IF-2 and IF-3 are released leaving the mature 70S translation initiation complex. The sequence is that of Translation initiation factor IF-1 from Psychrobacter arcticus (strain DSM 17307 / VKM B-2377 / 273-4).